A 478-amino-acid polypeptide reads, in one-letter code: Adenylosuccinate lyase (478 aa).

Residues 14–15, 81–83, and 107–108 each bind substrate; these read RY, KHD, and TS. Residue H155 is the Proton donor/acceptor of the active site. Q237 is a substrate binding site. Residue S285 is the Proton donor/acceptor of the active site. Substrate contacts are provided by R299, R325, S330, and R334.

Belongs to the lyase 1 family. Adenylosuccinate lyase subfamily. In terms of assembly, homotetramer. Residues from neighboring subunits contribute catalytic and substrate-binding residues to each active site.

It carries out the reaction N(6)-(1,2-dicarboxyethyl)-AMP = fumarate + AMP. The catalysed reaction is (2S)-2-[5-amino-1-(5-phospho-beta-D-ribosyl)imidazole-4-carboxamido]succinate = 5-amino-1-(5-phospho-beta-D-ribosyl)imidazole-4-carboxamide + fumarate. It participates in purine metabolism; AMP biosynthesis via de novo pathway; AMP from IMP: step 2/2. Its pathway is purine metabolism; IMP biosynthesis via de novo pathway; 5-amino-1-(5-phospho-D-ribosyl)imidazole-4-carboxamide from 5-amino-1-(5-phospho-D-ribosyl)imidazole-4-carboxylate: step 2/2. In terms of biological role, catalyzes two non-sequential steps in de novo AMP synthesis: converts (S)-2-(5-amino-1-(5-phospho-D-ribosyl)imidazole-4-carboxamido)succinate (SAICAR) to fumarate plus 5-amino-1-(5-phospho-D-ribosyl)imidazole-4-carboxamide, and thereby also contributes to de novo IMP synthesis, and converts succinyladenosine monophosphate (SAMP) to AMP and fumarate. The chain is Adenylosuccinate lyase from Caenorhabditis briggsae.